The following is a 57-amino-acid chain: Large ribosomal subunit protein uL30 (57 aa).

This sequence belongs to the universal ribosomal protein uL30 family. In terms of assembly, part of the 50S ribosomal subunit.

The chain is Large ribosomal subunit protein uL30 from Clostridium perfringens (strain ATCC 13124 / DSM 756 / JCM 1290 / NCIMB 6125 / NCTC 8237 / Type A).